The sequence spans 295 residues: Pyridoxal 5'-phosphate synthase subunit PdxS (295 aa).

Position 23 (Asp-23) interacts with D-ribose 5-phosphate. Lys-80 acts as the Schiff-base intermediate with D-ribose 5-phosphate in catalysis. Position 152 (Gly-152) interacts with D-ribose 5-phosphate. Arg-164 provides a ligand contact to D-glyceraldehyde 3-phosphate. D-ribose 5-phosphate is bound by residues Gly-213 and 234 to 235 (GS).

It belongs to the PdxS/SNZ family. In terms of assembly, in the presence of PdxT, forms a dodecamer of heterodimers.

It catalyses the reaction aldehydo-D-ribose 5-phosphate + D-glyceraldehyde 3-phosphate + L-glutamine = pyridoxal 5'-phosphate + L-glutamate + phosphate + 3 H2O + H(+). The protein operates within cofactor biosynthesis; pyridoxal 5'-phosphate biosynthesis. Catalyzes the formation of pyridoxal 5'-phosphate from ribose 5-phosphate (RBP), glyceraldehyde 3-phosphate (G3P) and ammonia. The ammonia is provided by the PdxT subunit. Can also use ribulose 5-phosphate and dihydroxyacetone phosphate as substrates, resulting from enzyme-catalyzed isomerization of RBP and G3P, respectively. The sequence is that of Pyridoxal 5'-phosphate synthase subunit PdxS from Methanosphaera stadtmanae (strain ATCC 43021 / DSM 3091 / JCM 11832 / MCB-3).